Reading from the N-terminus, the 223-residue chain is MVSFKQVRVPLFTAIALVIVLLLAYFLPPRVRGGGRVAAAAITWVPKPNVEVWPVDPPPPVNFNKTAEQEYGDKEVKLPHWTPTLHTFQVPQNYTKANCTYCNTREYTFSYKGCCFYFTKKKHTWNGCFQACAELYPCTYFYGPTPDILPVVTRNLNAIESLWVGVYRVGEGNWTSLDGGTFKVYQIFGSHCTYVSKFSTVPVSHHECSFLKPCLCVSQRSNS.

The Intravirion segment spans residues 1 to 8; it reads MVSFKQVR. A helical membrane pass occupies residues 9–29; the sequence is VPLFTAIALVIVLLLAYFLPP. The Virion surface portion of the chain corresponds to 30–223; sequence RVRGGGRVAA…CLCVSQRSNS (194 aa). Intrachain disulfides connect Cys-99/Cys-138, Cys-102/Cys-115, Cys-128/Cys-214, Cys-132/Cys-216, and Cys-192/Cys-208. The C-type lectin domain occupies 111–217; that stretch reads YKGCCFYFTK…CSFLKPCLCV (107 aa).

It belongs to the epstein barr virus gp42 family. Forms a complex with gp25 and gp85 via its N-terminus; this complex is used for invasion of B-lymphocytes. Interacts with human HLA-DRA and HLA-DRB1.

It localises to the virion membrane. The protein resides in the host membrane. Functionally, plays a role in virion attachment to host B-lymphocytes, through binding to leukocyte antigen (HLA) class II and subsequently participates in fusion of the virion with host membranes. May act as a tropism switch that directs fusion with B-lymphocytes and inhibits fusion with epithelial cells. Additionally, hampers T-cell recognition via HLA class II molecules through steric hindrance of T-cell receptor-class II-peptide interaction. Soluble gp42 inhibits HLA class II-restricted antigen presentation to T-cells through binding to immature and mature HLA class II complexes. The chain is Glycoprotein 42 from Epstein-Barr virus (strain B95-8) (HHV-4).